A 62-amino-acid polypeptide reads, in one-letter code: Large ribosomal subunit protein uL29 (62 aa).

It belongs to the universal ribosomal protein uL29 family.

This Trichlorobacter lovleyi (strain ATCC BAA-1151 / DSM 17278 / SZ) (Geobacter lovleyi) protein is Large ribosomal subunit protein uL29.